We begin with the raw amino-acid sequence, 274 residues long: 2,3,4,5-tetrahydropyridine-2,6-dicarboxylate N-succinyltransferase (274 aa).

The substrate site is built by R105 and D142.

This sequence belongs to the transferase hexapeptide repeat family. In terms of assembly, homotrimer.

It is found in the cytoplasm. It catalyses the reaction (S)-2,3,4,5-tetrahydrodipicolinate + succinyl-CoA + H2O = (S)-2-succinylamino-6-oxoheptanedioate + CoA. Its pathway is amino-acid biosynthesis; L-lysine biosynthesis via DAP pathway; LL-2,6-diaminopimelate from (S)-tetrahydrodipicolinate (succinylase route): step 1/3. The protein is 2,3,4,5-tetrahydropyridine-2,6-dicarboxylate N-succinyltransferase of Methylobacillus flagellatus (strain ATCC 51484 / DSM 6875 / VKM B-1610 / KT).